The following is a 71-amino-acid chain: Arrestin-D (71 aa).

It belongs to the arrestin family. As to expression, adrenal, cerebral cortex, heart, liver, lung, pituitary and testis.

The sequence is that of Arrestin-D (Dar) from Rattus norvegicus (Rat).